Reading from the N-terminus, the 238-residue chain is Ribosomal RNA small subunit methyltransferase G (238 aa).

S-adenosyl-L-methionine-binding positions include Gly-77, Phe-82, 128-129 (AE), and Arg-147.

The protein belongs to the methyltransferase superfamily. RNA methyltransferase RsmG family.

It localises to the cytoplasm. In terms of biological role, specifically methylates the N7 position of guanine in position 535 of 16S rRNA. This Lysinibacillus sphaericus (strain C3-41) protein is Ribosomal RNA small subunit methyltransferase G.